The following is a 215-amino-acid chain: MRRVVGKRVQEFSDAEFEQLRSQYDDVVLDVGTGDGKHPYKVARQNPSRLVVALDADKSRMEKISAKAAAKPAKGGLPNLLYLWATAERLPPLSGVGELHVLMPWGSLLRGVLGSSPEMLRGMAAVCRPGASFLVALNLHAWRPSVPEVGEHPEPTPDSADEWLAPRYAEAGWKLADCRYLEPEEVAGLETSWTRRLHSSRDRFDVLALTGTISP.

S-adenosyl-L-methionine is bound by residues Gly32, Asp55, 87–88, 102–107, and 191–193; these read AE, LMPWGS, and TSW.

The protein belongs to the methyltransferase superfamily. Kanamycin-apramycin resistance family.

The enzyme catalyses adenosine(1408) in 16S rRNA + S-adenosyl-L-methionine = N(1)-methyladenosine(1408) in 16S rRNA + S-adenosyl-L-homocysteine + H(+). Functionally, specifically methylates the N(1) position of adenine 1408 in 16S rRNA. Confers resistance to various aminoglycosides, including kanamycin, neomycin and apramycin. The polypeptide is 16S rRNA (adenine(1408)-N(1))-methyltransferase (kamB) (Streptoalloteichus tenebrarius (strain ATCC 17920 / DSM 40477 / JCM 4838 / CBS 697.72 / NBRC 16177 / NCIMB 11028 / NRRL B-12390 / A12253. 1 / ISP 5477) (Streptomyces tenebrarius)).